Reading from the N-terminus, the 515-residue chain is MTKRALISVSDKSGIIDFAKELKNLGWDIISTGGTKVALDDAGVETIAIDDVTGFPEMMDGRVKTLHPNIHGGLLARRDADSHLQAAKDNNIELIDLVVVNLYPFKETILRPDVTYDLAVENIDIGGPSMLRSAAKNHASVTVVVDSADYATVLGELADASQTTFKTRQRLAAKAFRHTAAYDALIAEYFTAQVGEAKPEKLTITYDLKQAMRYGENPQQDADFYQKALPTDYSIASAKQLNGKELSFNNIRDADAAIRIIRDFKDSPTVVALKHMNPCGIGQADDIETAWDYAYEADPVSIFGGIVVLNREVDAATAEKMHPIFLEIIIAPSYSEEALAILTNKKKNLRILELPFDAQAASEVEAEYTGVVGGLLVQNQDVVAENPSDWQVVTDRQPTEQEATALEFAWKAIKYVKSNGIIITNDHMTLGLGAGQTNRVGSVKIAIEQAKDHLDGAVLASDAFFPFADNIEEIAAAGIKAIIQPGGSVRDQESIDAANKHGLTMIFTGVRHFRH.

Residues M1–V145 form the MGS-like domain.

It belongs to the PurH family.

The catalysed reaction is (6R)-10-formyltetrahydrofolate + 5-amino-1-(5-phospho-beta-D-ribosyl)imidazole-4-carboxamide = 5-formamido-1-(5-phospho-D-ribosyl)imidazole-4-carboxamide + (6S)-5,6,7,8-tetrahydrofolate. The enzyme catalyses IMP + H2O = 5-formamido-1-(5-phospho-D-ribosyl)imidazole-4-carboxamide. It functions in the pathway purine metabolism; IMP biosynthesis via de novo pathway; 5-formamido-1-(5-phospho-D-ribosyl)imidazole-4-carboxamide from 5-amino-1-(5-phospho-D-ribosyl)imidazole-4-carboxamide (10-formyl THF route): step 1/1. Its pathway is purine metabolism; IMP biosynthesis via de novo pathway; IMP from 5-formamido-1-(5-phospho-D-ribosyl)imidazole-4-carboxamide: step 1/1. The protein is Bifunctional purine biosynthesis protein PurH of Streptococcus agalactiae serotype III (strain NEM316).